Reading from the N-terminus, the 343-residue chain is MIKASIIGASGYVGVELIRLLLRHPEVEIVSIISSSSNQLSIDKTNPQFKKVSNLVFEEFKIEAIQEADVVFCALPHGISQEYVKIGYDIGKVVIDLSADFRYKDLQRYAKDYSQHKYPELLSKSAYGLCEINREEIKNAQIIGNPGCYPTSAILGLAPLLKNKLVDKNSIIIDSKSGVSGAGKKFDFAYSFCELDENFKAYSVTKHRHTSEIEEKCSFLFGEDLNLSFTPHLLPVKRGILSTIYANLIKKIDKNDLVEIYNEFYKDEYFIRIFEDELPELKYVRGTNFVDIGFEVDKKTNRVIIISCIDNLIKGAAGQAIQNMNIKFSLDEKMGLIMVGEYF.

Residue C148 is part of the active site.

It belongs to the NAGSA dehydrogenase family. Type 1 subfamily.

It is found in the cytoplasm. The catalysed reaction is N-acetyl-L-glutamate 5-semialdehyde + phosphate + NADP(+) = N-acetyl-L-glutamyl 5-phosphate + NADPH + H(+). Its pathway is amino-acid biosynthesis; L-arginine biosynthesis; N(2)-acetyl-L-ornithine from L-glutamate: step 3/4. Functionally, catalyzes the NADPH-dependent reduction of N-acetyl-5-glutamyl phosphate to yield N-acetyl-L-glutamate 5-semialdehyde. This Caldicellulosiruptor bescii (strain ATCC BAA-1888 / DSM 6725 / KCTC 15123 / Z-1320) (Anaerocellum thermophilum) protein is N-acetyl-gamma-glutamyl-phosphate reductase.